The following is a 668-amino-acid chain: DNA mismatch repair protein MutL (668 aa).

This sequence belongs to the DNA mismatch repair MutL/HexB family.

Functionally, this protein is involved in the repair of mismatches in DNA. It is required for dam-dependent methyl-directed DNA mismatch repair. May act as a 'molecular matchmaker', a protein that promotes the formation of a stable complex between two or more DNA-binding proteins in an ATP-dependent manner without itself being part of a final effector complex. This is DNA mismatch repair protein MutL from Limosilactobacillus reuteri (strain DSM 20016) (Lactobacillus reuteri).